The primary structure comprises 493 residues: Argininosuccinate lyase (493 aa).

The protein belongs to the lyase 1 family. Argininosuccinate lyase subfamily.

It localises to the cytoplasm. It catalyses the reaction 2-(N(omega)-L-arginino)succinate = fumarate + L-arginine. Its pathway is amino-acid biosynthesis; L-arginine biosynthesis; L-arginine from L-ornithine and carbamoyl phosphate: step 3/3. This Methanospirillum hungatei JF-1 (strain ATCC 27890 / DSM 864 / NBRC 100397 / JF-1) protein is Argininosuccinate lyase.